Here is an 87-residue protein sequence, read N- to C-terminus: Putative protein KleG (87 aa).

Disordered regions lie at residues 1-23 (MRHS…WPSS) and 61-87 (IPTT…IFSR). Over residues 68–78 (RGRRPQRHRPS) the composition is skewed to basic residues.

The sequence is that of Putative protein KleG (kleG) from Escherichia coli.